We begin with the raw amino-acid sequence, 136 residues long: S-protein homolog 25 (136 aa).

Residues 1 to 20 (MNHSVFVILITITYFGLNQA) form the signal peptide. N-linked (GlcNAc...) asparagine glycans are attached at residues Asn71 and Asn84.

The protein belongs to the plant self-incompatibility (S1) protein family.

Its subcellular location is the secreted. The protein is S-protein homolog 25 of Arabidopsis thaliana (Mouse-ear cress).